Reading from the N-terminus, the 259-residue chain is tRNA pseudouridine synthase A (259 aa).

The active-site Nucleophile is the D52. Y113 contacts substrate.

Belongs to the tRNA pseudouridine synthase TruA family. Homodimer.

The enzyme catalyses uridine(38/39/40) in tRNA = pseudouridine(38/39/40) in tRNA. Formation of pseudouridine at positions 38, 39 and 40 in the anticodon stem and loop of transfer RNAs. In Allorhizobium ampelinum (strain ATCC BAA-846 / DSM 112012 / S4) (Agrobacterium vitis (strain S4)), this protein is tRNA pseudouridine synthase A.